The primary structure comprises 428 residues: Ectoine/5-hydroxyectoine TRAP transporter large permease protein UehC (428 aa).

Transmembrane regions (helical) follow at residues 9–29 (MIVL…GAFI), 49–69 (LAGI…AADI), 99–119 (AAAC…VVAI), 139–159 (ALIV…GMII), 172–192 (FIAG…YAYI), 217–237 (ALWP…GVFS), 242–262 (AAAC…SMSL), 273–293 (GLIT…SWVI), 302–322 (ILGA…VISI), 324–344 (FFIG…VPVF), 366–386 (VAIG…IAVF), and 400–420 (FILM…IALF).

Belongs to the TRAP transporter large permease family. In terms of assembly, the complex comprises the extracytoplasmic solute receptor protein UehA, and the two transmembrane proteins UehB and UehC.

Its subcellular location is the cell inner membrane. Functionally, part of the tripartite ATP-independent periplasmic (TRAP) transport system UehABC, which imports both ectoine and 5-hydroxyectoine as nutrients, and not as osmoprotectants. The protein is Ectoine/5-hydroxyectoine TRAP transporter large permease protein UehC of Ruegeria pomeroyi (strain ATCC 700808 / DSM 15171 / DSS-3) (Silicibacter pomeroyi).